Here is a 132-residue protein sequence, read N- to C-terminus: Small ribosomal subunit protein uS9 (132 aa).

Belongs to the universal ribosomal protein uS9 family.

The protein is Small ribosomal subunit protein uS9 (rpsI) of Mycoplasma pneumoniae (strain ATCC 29342 / M129 / Subtype 1) (Mycoplasmoides pneumoniae).